The following is a 305-amino-acid chain: Exosome complex component RRP45 (305 aa).

This sequence belongs to the RNase PH family. Component of the RNA exosome complex. Specifically part of the catalytically inactive RNA exosome core complex (Exo-9) which may associate with the catalytic subunits RRP6 and DIS3 in cytoplasmic- and nuclear-specific RNA exosome complex forms. Exo-9 is formed by a hexameric base ring of RNase PH domain-containing subunits and a cap ring consisting of CSL4, RRP4 and RRP40. Interacts with LRP1.

It localises to the cytoplasm. It is found in the nucleus. The protein resides in the nucleolus. Its function is as follows. Non-catalytic component of the RNA exosome complex which has 3'-&gt;5' exoribonuclease activity and participates in a multitude of cellular RNA processing and degradation events. In the nucleus, the RNA exosome complex is involved in proper maturation of stable RNA species such as rRNA, snRNA and snoRNA, in the elimination of RNA processing by-products and non-coding 'pervasive' transcripts, such as antisense RNA species and cryptic unstable transcripts (CUTs), and of mRNAs with processing defects, thereby limiting or excluding their export to the cytoplasm. In the cytoplasm, the RNA exosome complex is involved in general mRNA turnover and in RNA surveillance pathways, preventing translation of aberrant mRNAs. The catalytic inactive RNA exosome core complex of 9 subunits (Exo-9) is proposed to play a pivotal role in the binding and presentation of RNA for ribonucleolysis, and to serve as a scaffold for the association with catalytic subunits and accessory proteins or complexes. RRP45 is part of the hexameric ring of RNase PH domain-containing subunits proposed to form a central channel which threads RNA substrates for degradation. This Saccharomyces cerevisiae (strain ATCC 204508 / S288c) (Baker's yeast) protein is Exosome complex component RRP45 (RRP45).